The following is a 267-amino-acid chain: Undecaprenyl-diphosphatase (267 aa).

The next 7 membrane-spanning stretches (helical) occupy residues 1–21, 49–69, 83–103, 111–131, 190–210, 219–239, and 245–265; these read MTLF…FLPV, VGTL…AVAG, AFLA…GLAL, ALRS…VLYW, MLMS…EVAA, DAAI…TLMM, and VSFT…LIIA.

This sequence belongs to the UppP family.

The protein resides in the cell inner membrane. The enzyme catalyses di-trans,octa-cis-undecaprenyl diphosphate + H2O = di-trans,octa-cis-undecaprenyl phosphate + phosphate + H(+). Catalyzes the dephosphorylation of undecaprenyl diphosphate (UPP). Confers resistance to bacitracin. The chain is Undecaprenyl-diphosphatase from Dinoroseobacter shibae (strain DSM 16493 / NCIMB 14021 / DFL 12).